We begin with the raw amino-acid sequence, 166 residues long: Small ribosomal subunit protein uS5 (166 aa).

In terms of domain architecture, S5 DRBM spans 11 to 74 (LIDKVVHISR…ESAKRTMFEV (64 aa)).

This sequence belongs to the universal ribosomal protein uS5 family. In terms of assembly, part of the 30S ribosomal subunit. Contacts proteins S4 and S8.

Functionally, with S4 and S12 plays an important role in translational accuracy. Its function is as follows. Located at the back of the 30S subunit body where it stabilizes the conformation of the head with respect to the body. The chain is Small ribosomal subunit protein uS5 from Syntrophobacter fumaroxidans (strain DSM 10017 / MPOB).